Here is a 652-residue protein sequence, read N- to C-terminus: Probable serine/threonine-protein kinase mkcD (652 aa).

Disordered regions lie at residues 1–47, 163–198, and 257–289; these read MNNI…RKNK, NPID…LTNV, and QQKL…TLSP. Over residues 182–191 the composition is skewed to gly residues; the sequence is NGGGSGGGGD. Positions 231–275 form a coiled coil; it reads KNNQNLHHKQQQLQQLQQLKQQHLQQQQKLKQEQQQEQQQQQEDE. Residues 257 to 271 are compositionally biased toward low complexity; sequence QQKLKQEQQQEQQQQ. Residues 279–289 show a composition bias toward polar residues; the sequence is SPVSTSSTLSP. Residues 369–626 form the Protein kinase domain; sequence FKNLDFEARG…SSQLLQHPFL (258 aa). ATP-binding positions include 375 to 383 and lysine 403; that span reads EARGGFGSV. Aspartate 494 acts as the Proton acceptor in catalysis.

The protein belongs to the protein kinase superfamily. STE Ser/Thr protein kinase family. STE20 subfamily. The cofactor is Mg(2+).

It carries out the reaction L-seryl-[protein] + ATP = O-phospho-L-seryl-[protein] + ADP + H(+). It catalyses the reaction L-threonyl-[protein] + ATP = O-phospho-L-threonyl-[protein] + ADP + H(+). The chain is Probable serine/threonine-protein kinase mkcD from Dictyostelium discoideum (Social amoeba).